A 1007-amino-acid chain; its full sequence is uncharacterized protein (1007 aa).

The signal sequence occupies residues 1–51 (MTTPISNSPSSIPTVTVSTTTASSGSLGTSTVSSTTTSTSVAQTATTTSSA). The segment covering 1 to 96 (MTTPISNSPS…SATANKTSSA (96 aa)) has biased composition (low complexity). Disordered stretches follow at residues 1–186 (MTTP…GNPI), 200–224 (TYTTSPRNENIFSPGPEGLPNMSLP), 387–533 (NWGS…GPDI), 543–562 (TVYPGENGGSTEGPLPANQN), 578–645 (ETII…GPDI), 655–674 (TVYPGENGGSTEGPLPANQN), and 712–757 (DLED…GPDI). Residues 118–163 (DGEVSSNYDDVDTPTNSSDSTVDSDYQDVETQYKTISNNGENTYET) are compositionally biased toward polar residues. Positions 167 to 176 (HGEKNTHVQE) are enriched in basic and acidic residues. 2 stretches are compositionally biased toward polar residues: residues 177–186 (SHASGTGNPI) and 200–210 (TYTTSPRNENI). Positions 423 to 442 (VINVNVNVGGTNVNIGDTNV) are enriched in low complexity. A compositionally biased stretch (polar residues) spans 443–453 (SKGSGTPTSSQ). Low complexity predominate over residues 469 to 491 (IDTNNQTNGDINTNDNSNNVDGS). Residues 507–523 (DTESTNGNDSGKTTSTE) are compositionally biased toward polar residues. Positions 597–618 (ADADVEDTSDTDSGIGDDDGVS) are enriched in acidic residues. The segment covering 619-635 (DTESTNGNNSGKTTSTE) has biased composition (low complexity). Over residues 712 to 730 (DLEDVSDADSGFGDDDGIS) the composition is skewed to acidic residues. The span at 732-743 (TESTNGNDSGKN) shows a compositional bias: polar residues.

The protein belongs to the chlamydial CPn_0572/CT_456/TC_0741 family.

This is an uncharacterized protein from Chlamydia muridarum (strain MoPn / Nigg).